Reading from the N-terminus, the 185-residue chain is Protein OPG161 (185 aa).

The Intravirion segment spans residues 1–33; sequence MMTPENDEEQTSVFSATVYGDKIQGKNKRKRVI. A helical membrane pass occupies residues 34–56; the sequence is GLCIRISMVISLLSMITMSAFLI. Residues 57–185 are Virion surface-facing; sequence VRLNQCMSAN…RKYFCVKTMN (129 aa). Residues 98-185 are C-type lectin-like domain; that stretch reads ESCNGLYYQG…RKYFCVKTMN (88 aa). N125 and N135 each carry an N-linked (GlcNAc...) asparagine; by host glycan.

It belongs to the orthopoxvirus OPG161 family. In terms of assembly, homodimer, disulfide-linked. Interacts with protein OPG190. Interacts (via C-terminus) with protein OPG164. Interacts with OPG162.

The protein resides in the virion membrane. It is found in the host membrane. Its function is as follows. Forms a complex with OPG162 and OPG190 to coordinate the incorporation of OPG164 into wrapped enveloped virion (EV) membranes and, subsequently, the production of actin tails. Therefore plays an essential role in efficient cell-to-cell spread of viral particles. In Homo sapiens (Human), this protein is Protein OPG161 (OPG161).